The primary structure comprises 232 residues: Aspartate/glutamate leucyltransferase (232 aa).

The protein belongs to the R-transferase family. Bpt subfamily.

The protein resides in the cytoplasm. It carries out the reaction N-terminal L-glutamyl-[protein] + L-leucyl-tRNA(Leu) = N-terminal L-leucyl-L-glutamyl-[protein] + tRNA(Leu) + H(+). The enzyme catalyses N-terminal L-aspartyl-[protein] + L-leucyl-tRNA(Leu) = N-terminal L-leucyl-L-aspartyl-[protein] + tRNA(Leu) + H(+). Functions in the N-end rule pathway of protein degradation where it conjugates Leu from its aminoacyl-tRNA to the N-termini of proteins containing an N-terminal aspartate or glutamate. This Vibrio vulnificus (strain CMCP6) protein is Aspartate/glutamate leucyltransferase.